We begin with the raw amino-acid sequence, 539 residues long: Cytochrome P450 monooxygenase buaD (539 aa).

Positions 1 to 16 (MLVPVLTLLGTLTATG) are cleaved as a signal peptide. N-linked (GlcNAc...) asparagine glycosylation is present at Asn120. Heme is bound at residue Cys478. Asn520 is a glycosylation site (N-linked (GlcNAc...) asparagine).

It belongs to the cytochrome P450 family. The cofactor is heme.

It functions in the pathway mycotoxin biosynthesis. Functionally, cytochrome P450 monooxygenase; part of the gene cluster that mediates the biosynthesis of burnettramic acids, an unusual class of bolaamphiphilic pyrrolizidinediones that display potent antibacterial, antifungal, and cytotoxic activities. The first step of the biosynthesis of burnettramic acids is the hydroxylation of proline by the proline hydroxylase buaE to generate 4-hydroxyproline. The PKS-NRPS buaA and trans-enoyl reductase buaC construct the highly reduced polyketide chain, and the condensation (C) domain of buaA then catalyzes the amide bond formation with the activated 4-hydroxyproline. This is followed by the R domain releasing the nascent polyketide-peptide directly via a Dieckmann condensation to afford a tetramic acid fused to the hydroxyproline, generating the bicyclic pyrrolidinedione moiety. The cytochrome P450 monooxygenases buaD and buaG are likely responsible for the multiple hydroxylations on the polyketide chain and its terminus, although in the heterologous context, buaD does not appear to be required. Therefore, while buaG may be a multifunctional cytochrome P450 monooxygenase, it cannot be ruled out that the two secondary alcohols on the polyketide chain could have an acetate origin. Finally, the glycosyltransferase buaB transfers beta-D-mannose to the aglycone burnettramic acid A to form burnettramic acid A. Burnettramic acid B is a minor cis-pyrrolizidine epimer of burnettramic acid A and it is likely that small amounts of it form naturally in acidic environments. The chain is Cytochrome P450 monooxygenase buaD from Petromyces alliaceus (Aspergillus alliaceus).